The sequence spans 527 residues: Lysine--tRNA ligase (527 aa).

The 'HIGH' region signature appears at 44–52; that stretch reads PSGLPHIGT. The 'KMSKS' region motif lies at 290-294; it reads KISKS. Residue K293 participates in ATP binding.

The protein belongs to the class-I aminoacyl-tRNA synthetase family.

The protein localises to the cytoplasm. The catalysed reaction is tRNA(Lys) + L-lysine + ATP = L-lysyl-tRNA(Lys) + AMP + diphosphate. The chain is Lysine--tRNA ligase from Roseobacter denitrificans (strain ATCC 33942 / OCh 114) (Erythrobacter sp. (strain OCh 114)).